The primary structure comprises 414 residues: Esterase FrsA (414 aa).

Belongs to the FrsA family.

The catalysed reaction is a carboxylic ester + H2O = an alcohol + a carboxylate + H(+). Its function is as follows. Catalyzes the hydrolysis of esters. This is Esterase FrsA from Salmonella typhi.